The following is a 153-amino-acid chain: Prefoldin subunit alpha (153 aa).

The tract at residues Lys-126–Glu-153 is disordered. Residues His-143–Glu-153 show a composition bias toward basic and acidic residues.

It belongs to the prefoldin alpha subunit family. In terms of assembly, heterohexamer of two alpha and four beta subunits.

The protein localises to the cytoplasm. Its function is as follows. Molecular chaperone capable of stabilizing a range of proteins. Seems to fulfill an ATP-independent, HSP70-like function in archaeal de novo protein folding. The protein is Prefoldin subunit alpha of Methanoregula boonei (strain DSM 21154 / JCM 14090 / 6A8).